Consider the following 280-residue polypeptide: Delta(3,5)-Delta(2,4)-dienoyl-CoA isomerase (280 aa).

Glu-154 acts as the Proton donor/acceptor in catalysis. A Peroxisome targeting signal (PTS1) motif is present at residues 278–280 (HKL).

It belongs to the enoyl-CoA hydratase/isomerase family.

The protein resides in the cytoplasm. The protein localises to the cytosol. Its subcellular location is the peroxisome. The enzyme catalyses a (3E,5Z)-dienoyl-CoA = a (2E,4E)-(5,6-saturated)-dienoyl-CoA. It participates in lipid metabolism; fatty acid beta-oxidation. Functionally, peroxisomal di-isomerase that is involved in fatty acid metabolism enzyme by converting 3,5-dienoyl-CoAs to the corresponding 2,4-dienoyl-CoAs. Involved in fatty acid beta-oxidation, which is important for lipid droplets degradation and infectious growth. In Pyricularia oryzae (strain 70-15 / ATCC MYA-4617 / FGSC 8958) (Rice blast fungus), this protein is Delta(3,5)-Delta(2,4)-dienoyl-CoA isomerase.